The sequence spans 156 residues: ATP synthase subunit b (156 aa).

The chain crosses the membrane as a helical span at residues 11 to 31 (LIAFALFVWFCMKFVWPPIIN).

Belongs to the ATPase B chain family. As to quaternary structure, F-type ATPases have 2 components, F(1) - the catalytic core - and F(0) - the membrane proton channel. F(1) has five subunits: alpha(3), beta(3), gamma(1), delta(1), epsilon(1). F(0) has three main subunits: a(1), b(2) and c(10-14). The alpha and beta chains form an alternating ring which encloses part of the gamma chain. F(1) is attached to F(0) by a central stalk formed by the gamma and epsilon chains, while a peripheral stalk is formed by the delta and b chains.

The protein localises to the cell inner membrane. Its function is as follows. F(1)F(0) ATP synthase produces ATP from ADP in the presence of a proton or sodium gradient. F-type ATPases consist of two structural domains, F(1) containing the extramembraneous catalytic core and F(0) containing the membrane proton channel, linked together by a central stalk and a peripheral stalk. During catalysis, ATP synthesis in the catalytic domain of F(1) is coupled via a rotary mechanism of the central stalk subunits to proton translocation. In terms of biological role, component of the F(0) channel, it forms part of the peripheral stalk, linking F(1) to F(0). The chain is ATP synthase subunit b from Haemophilus influenzae (strain 86-028NP).